The chain runs to 27 residues: U18-ctenitoxin-Co1a (27 aa).

It belongs to the u18-CNTX family. As to expression, expressed by the venom gland.

The protein localises to the secreted. In terms of biological role, not toxic to mice by intracerebroventricular injection. This chain is U18-ctenitoxin-Co1a, found in Ctenus ornatus (Brazilian spider).